We begin with the raw amino-acid sequence, 160 residues long: Ribosomal RNA large subunit methyltransferase H (160 aa).

Residues Leu-77, Gly-109, and 128–133 (FSRMTF) each bind S-adenosyl-L-methionine.

This sequence belongs to the RNA methyltransferase RlmH family. In terms of assembly, homodimer.

Its subcellular location is the cytoplasm. It carries out the reaction pseudouridine(1915) in 23S rRNA + S-adenosyl-L-methionine = N(3)-methylpseudouridine(1915) in 23S rRNA + S-adenosyl-L-homocysteine + H(+). Its function is as follows. Specifically methylates the pseudouridine at position 1915 (m3Psi1915) in 23S rRNA. In Pelotomaculum thermopropionicum (strain DSM 13744 / JCM 10971 / SI), this protein is Ribosomal RNA large subunit methyltransferase H.